The following is a 129-amino-acid chain: Flagellar assembly factor FliW (129 aa).

It belongs to the FliW family. Interacts with translational regulator CsrA and flagellin(s).

The protein resides in the cytoplasm. Acts as an anti-CsrA protein, binds CsrA and prevents it from repressing translation of its target genes, one of which is flagellin. Binds to flagellin and participates in the assembly of the flagellum. In Campylobacter jejuni subsp. doylei (strain ATCC BAA-1458 / RM4099 / 269.97), this protein is Flagellar assembly factor FliW.